Reading from the N-terminus, the 162-residue chain is Large ribosomal subunit protein uL10 (162 aa).

It belongs to the universal ribosomal protein uL10 family. As to quaternary structure, part of the ribosomal stalk of the 50S ribosomal subunit. The N-terminus interacts with L11 and the large rRNA to form the base of the stalk. The C-terminus forms an elongated spine to which L12 dimers bind in a sequential fashion forming a multimeric L10(L12)X complex.

Its function is as follows. Forms part of the ribosomal stalk, playing a central role in the interaction of the ribosome with GTP-bound translation factors. The polypeptide is Large ribosomal subunit protein uL10 (Borreliella afzelii (strain PKo) (Borrelia afzelii)).